A 384-amino-acid chain; its full sequence is S-adenosylmethionine synthase (384 aa).

Residue histidine 15 coordinates ATP. Aspartate 17 lines the Mg(2+) pocket. Glutamate 43 provides a ligand contact to K(+). L-methionine is bound by residues glutamate 56 and glutamine 99. Residues 99–109 (QSPDINQGVDR) form a flexible loop region. Residues 164–166 (DAK), 230–231 (RF), aspartate 239, 245–246 (RK), alanine 262, and lysine 266 contribute to the ATP site. Residue aspartate 239 coordinates L-methionine. Lysine 270 serves as a coordination point for L-methionine.

Belongs to the AdoMet synthase family. Homotetramer; dimer of dimers. It depends on Mg(2+) as a cofactor. The cofactor is K(+).

Its subcellular location is the cytoplasm. It carries out the reaction L-methionine + ATP + H2O = S-adenosyl-L-methionine + phosphate + diphosphate. The protein operates within amino-acid biosynthesis; S-adenosyl-L-methionine biosynthesis; S-adenosyl-L-methionine from L-methionine: step 1/1. Its function is as follows. Catalyzes the formation of S-adenosylmethionine (AdoMet) from methionine and ATP. The overall synthetic reaction is composed of two sequential steps, AdoMet formation and the subsequent tripolyphosphate hydrolysis which occurs prior to release of AdoMet from the enzyme. The sequence is that of S-adenosylmethionine synthase from Proteus mirabilis (strain HI4320).